Here is a 380-residue protein sequence, read N- to C-terminus: Chaperone protein DnaJ (380 aa).

Positions 5–69 (DLYKVLGVEK…QKRAQYDQFG (65 aa)) constitute a J domain. The CR-type zinc-finger motif lies at 140 to 222 (GKKTTITYNR…CGGSGHTEQS (83 aa)). The Zn(2+) site is built by cysteine 153, cysteine 156, cysteine 170, cysteine 173, cysteine 196, cysteine 199, cysteine 210, and cysteine 213. CXXCXGXG motif repeat units lie at residues 153–160 (CETCGGSG), 170–177 (CSKCHGAG), 196–203 (CDVCHGTG), and 210–217 (CATCGGSG).

The protein belongs to the DnaJ family. In terms of assembly, homodimer. Requires Zn(2+) as cofactor.

The protein resides in the cytoplasm. In terms of biological role, participates actively in the response to hyperosmotic and heat shock by preventing the aggregation of stress-denatured proteins and by disaggregating proteins, also in an autonomous, DnaK-independent fashion. Unfolded proteins bind initially to DnaJ; upon interaction with the DnaJ-bound protein, DnaK hydrolyzes its bound ATP, resulting in the formation of a stable complex. GrpE releases ADP from DnaK; ATP binding to DnaK triggers the release of the substrate protein, thus completing the reaction cycle. Several rounds of ATP-dependent interactions between DnaJ, DnaK and GrpE are required for fully efficient folding. Also involved, together with DnaK and GrpE, in the DNA replication of plasmids through activation of initiation proteins. The polypeptide is Chaperone protein DnaJ (Lactiplantibacillus plantarum (strain ATCC BAA-793 / NCIMB 8826 / WCFS1) (Lactobacillus plantarum)).